The following is a 510-amino-acid chain: Histidine ammonia-lyase (510 aa).

Residues 143–145 (ASG) constitute a cross-link (5-imidazolinone (Ala-Gly)). S144 carries the post-translational modification 2,3-didehydroalanine (Ser).

This sequence belongs to the PAL/histidase family. Contains an active site 4-methylidene-imidazol-5-one (MIO), which is formed autocatalytically by cyclization and dehydration of residues Ala-Ser-Gly.

It is found in the cytoplasm. The catalysed reaction is L-histidine = trans-urocanate + NH4(+). It participates in amino-acid degradation; L-histidine degradation into L-glutamate; N-formimidoyl-L-glutamate from L-histidine: step 1/3. The protein is Histidine ammonia-lyase of Yersinia pestis.